The chain runs to 587 residues: Kelch-like protein 3 (587 aa).

Residues 1-24 (MEGESVKPSPQPTEQAGDGEKNRR) form a disordered region. The BTB domain occupies 50–117 (CDVMIVAEDV…IYTAEIEVTE (68 aa)). The region spanning 152–254 (CLGIRAFADV…PRDYLVQTVE (103 aa)) is the BACK domain. Residue Thr-295 is modified to Phosphothreonine. 6 Kelch repeats span residues 302-347 (VMIV…FMAG), 348-394 (HVYA…VLND), 396-441 (LYAV…VVEG), 442-490 (KLYA…VLSG), 491-537 (QLYA…AVNG), and 539-585 (LYVV…VSAS). Thr-375 is modified (phosphothreonine). Phosphoserine occurs at positions 376 and 433.

This sequence belongs to the KLHL3 family. In terms of assembly, homodimer. Component of the BCR(KLHL3) E3 ubiquitin ligase complex, at least composed of CUL3 and KLHL3 and RBX1. Interacts with CLDN8. In terms of processing, phosphorylation at Ser-433 by PKA or PKC decreases the interaction with WNK1 and WNK4, leading to inhibit their degradation by the BCR(KLHL3) complex. Phosphorylated at Ser-433 by PKC in response to angiotensin II signaling, decreasing ability to promote degradation of WNK1 and WNK4, leading to activation of Na-Cl cotransporter SLC12A3/NCC. Phosphorylation at Ser-433 is increased by insulin. Dephosphorylated at Ser-433 by calcineurin PPP3CA, promoting degradation of WNK1 and WNK4.

The protein localises to the cytoplasm. Its subcellular location is the cytoskeleton. It is found in the cytosol. It participates in protein modification; protein ubiquitination. Functionally, substrate-specific adapter of a BCR (BTB-CUL3-RBX1) E3 ubiquitin ligase complex that acts as a regulator of ion transport in the distal nephron. The BCR(KLHL3) complex acts by mediating ubiquitination and degradation of WNK1 and WNK4, two activators of Na-Cl cotransporter SLC12A3/NCC in distal convoluted tubule cells of kidney, thereby regulating NaCl reabsorption. The BCR(KLHL3) complex also mediates ubiquitination and degradation of WNK3. The BCR(KLHL3) complex also mediates ubiquitination of CLDN8, a tight-junction protein required for paracellular chloride transport in the kidney, leading to its degradation. The polypeptide is Kelch-like protein 3 (Klhl3) (Rattus norvegicus (Rat)).